Here is an 88-residue protein sequence, read N- to C-terminus: Co-chaperonin GroES (88 aa).

It belongs to the GroES chaperonin family. In terms of assembly, heptamer of 7 subunits arranged in a ring. Interacts with the chaperonin GroEL.

The protein localises to the cytoplasm. Functionally, together with the chaperonin GroEL, plays an essential role in assisting protein folding. The GroEL-GroES system forms a nano-cage that allows encapsulation of the non-native substrate proteins and provides a physical environment optimized to promote and accelerate protein folding. GroES binds to the apical surface of the GroEL ring, thereby capping the opening of the GroEL channel. The polypeptide is Co-chaperonin GroES (Treponema pallidum (strain Nichols)).